Reading from the N-terminus, the 2395-residue chain is Centrosomal protein of 295 kDa (2395 aa).

The segment at 1–540 (MKRKVMNGKL…KQADHLEVRP (540 aa)) is necessary for centriole targeting and microtubule association. Phosphoserine is present on serine 13. 5 coiled-coil regions span residues 53 to 84 (QRRNQQVSHLAEELRAEWEEAQSQKIQNLEKL), 114 to 148 (AERKTKAEARHKEALKAQKKQKEMLMKQKTRHIKA), 209 to 277 (DAHL…KRQT), 488 to 538 (ARHK…HLEV), and 567 to 592 (QQNRLHKQTVETARKRLLEYQTVLKE). Disordered stretches follow at residues 602-643 (LIPD…PVQP), 660-681 (GHIPQRQGETARAKQSVESQER), and 735-764 (SDSQQISSEDSENISSKPTEPSSSLPLMPE). Residue serine 634 is modified to Phosphoserine. A compositionally biased stretch (low complexity) spans 735-750 (SDSQQISSEDSENISS). Residues 817–848 (GQLELQKKVLQERQEAQEKLLSCTQKELEEQT) are a coiled coil. Disordered stretches follow at residues 864-893 (SLPSASAESGNIQTSSTKSDATVSSDSMDN), 966-986 (ADTQSRKIQKPPLPTNKKGLL), and 1212-1272 (VDPE…SKVT). A compositionally biased stretch (polar residues) spans 1219 to 1250 (FQFSPQTQENRSSQQTGFSSFTPSLRQPSCVS). Residues 1444 to 1488 (HDDLQALQQQLDVHREAIRSCQDIQEELLLQRLNKLEQRVSSKQI) adopt a coiled-coil conformation. At serine 1565 the chain carries Phosphoserine. Low complexity predominate over residues 1677 to 1692 (PWGDSSQGSSSGDQPG). 5 disordered regions span residues 1677-1715 (PWGDSSQGSSSGDQPGAAAVHAEHSGESLGKELSGRASK), 1819-1845 (SEEEEEEEACTNLSPLMKPDDEVETQE), 1875-1899 (ESFSEQTEHQEQESSSKEEETGSLS), 1989-2013 (DLSSPGTSQEDRDFYQQNSESSSEK), and 2354-2395 (NKTP…SQCI). Residues 1697–1710 (HAEHSGESLGKELS) show a composition bias toward basic and acidic residues. The segment covering 1880–1894 (QTEHQEQESSSKEEE) has biased composition (basic and acidic residues). The interval 2329–2395 (SLGEAFMKRK…TAKRNRSQCI (67 aa)) is ALMS motif. A compositionally biased stretch (basic and acidic residues) spans 2376 to 2388 (HLKEAVSGDETAK).

In terms of assembly, interacts (via ALMS motif) with microtubules; this interaction is direct.

The protein localises to the cytoplasm. It localises to the cytoskeleton. Its subcellular location is the microtubule organizing center. The protein resides in the centrosome. It is found in the centriole. The protein localises to the spindle. Functionally, centriole-enriched microtubule-binding protein involved in centriole biogenesis. Essential for the generation of the distal portion of new-born centrioles in a CPAP- and CEP120-mediated elongation dependent manner during the cell cycle S/G2 phase after formation of the initiating cartwheel structure. Required for the recruitment of centriolar proteins, such as POC1B, POC5 and CEP135, into the distal portion of centrioles. Also required for centriole-to-centrosome conversion during mitotic progression, but is dispensable for cartwheel removal or centriole disengagement. Binds to and stabilizes centriolar microtubule. May be involved in ciliogenesis. The chain is Centrosomal protein of 295 kDa from Rattus norvegicus (Rat).